A 217-amino-acid chain; its full sequence is Thymidylate kinase (217 aa).

An ATP-binding site is contributed by 7-14; the sequence is GIDGAGKS.

Belongs to the thymidylate kinase family.

It catalyses the reaction dTMP + ATP = dTDP + ADP. Functionally, phosphorylation of dTMP to form dTDP in both de novo and salvage pathways of dTTP synthesis. In Pelodictyon phaeoclathratiforme (strain DSM 5477 / BU-1), this protein is Thymidylate kinase.